A 422-amino-acid chain; its full sequence is UDP-N-acetylglucosamine 1-carboxyvinyltransferase (422 aa).

23-24 contributes to the phosphoenolpyruvate binding site; sequence KN. R92 lines the UDP-N-acetyl-alpha-D-glucosamine pocket. C116 acts as the Proton donor in catalysis. Residue C116 is modified to 2-(S-cysteinyl)pyruvic acid O-phosphothioketal. Residues 121–125, 161–164, D306, and I328 contribute to the UDP-N-acetyl-alpha-D-glucosamine site; these read RPVDL and KVSV.

Belongs to the EPSP synthase family. MurA subfamily.

It is found in the cytoplasm. The catalysed reaction is phosphoenolpyruvate + UDP-N-acetyl-alpha-D-glucosamine = UDP-N-acetyl-3-O-(1-carboxyvinyl)-alpha-D-glucosamine + phosphate. It participates in cell wall biogenesis; peptidoglycan biosynthesis. Functionally, cell wall formation. Adds enolpyruvyl to UDP-N-acetylglucosamine. This Aliivibrio fischeri (strain ATCC 700601 / ES114) (Vibrio fischeri) protein is UDP-N-acetylglucosamine 1-carboxyvinyltransferase.